The primary structure comprises 427 residues: MAP kinase-interacting serine/threonine-protein kinase 1 (427 aa).

Positions 1–11 (MVSSQKLEKPI) are enriched in basic and acidic residues. The disordered stretch occupies residues 1–37 (MVSSQKLEKPIEMGSSEPLPIVDSDKRRKKKRKTRAT). At Thr-34 the chain carries Phosphothreonine; by PAK2. Ser-39 carries the phosphoserine; by PAK2 modification. The Protein kinase domain occupies 49–333 (QLTSELLGEG…AAQVLQHPWV (285 aa)). ATP contacts are provided by residues 55-63 (LGEGAYAKV) and Lys-78. Asp-170 acts as the Proton acceptor in catalysis. Phosphoserine is present on residues Ser-180 and Ser-185. Residues Thr-209, Thr-214, and Thr-344 each carry the phosphothreonine modification. The tract at residues 407 to 427 (RALAQAGRSRDANPCLTPAGL) is disordered.

This sequence belongs to the protein kinase superfamily. CAMK Ser/Thr protein kinase family. As to quaternary structure, interacts with the C-terminal regions of EIF4G1 and EIF4G2. Also binds to dephosphorylated ERK1 and ERK2, and to the p38 kinases. It depends on Mg(2+) as a cofactor. Post-translationally, dual phosphorylation of Thr-209 and Thr-214 activates the kinase. Phosphorylation of Thr-344 activates the kinase. MAPK3/ERK1 is one of the kinases which activate MKNK1/MNK1. Phosphorylation by PAK2 leads to a reduced phosphorylation of EIF4G1. In terms of tissue distribution, ubiquitously expressed in all tissues examined, with high levels in skeletal muscle.

The enzyme catalyses L-seryl-[protein] + ATP = O-phospho-L-seryl-[protein] + ADP + H(+). It carries out the reaction L-threonyl-[protein] + ATP = O-phospho-L-threonyl-[protein] + ADP + H(+). Its activity is regulated as follows. Phosphorylated and activated by the p38 kinases and kinases in the Erk pathway. In terms of biological role, may play a role in the response to environmental stress and cytokines. Appears to regulate translation by phosphorylating EIF4E, thus increasing the affinity of this protein for the 7-methylguanosine-containing mRNA cap. The polypeptide is MAP kinase-interacting serine/threonine-protein kinase 1 (Mknk1) (Mus musculus (Mouse)).